We begin with the raw amino-acid sequence, 203 residues long: WUSCHEL-related homeobox 3 (203 aa).

The segment at residues 4-68 (TPSTRWCPTP…NHKARERQRL (65 aa)) is a DNA-binding region (homeobox; WUS-type). 3 disordered regions span residues 73–95 (CARH…TAAA), 109–135 (LHHH…QQQQ), and 180–203 (STSG…TSTN). Over residues 80-91 (PSPPSSTVPPAP) the composition is skewed to pro residues. Basic residues predominate over residues 109–118 (LHHHHHHHHP). Composition is skewed to low complexity over residues 119–135 (YAAA…QQQQ) and 190–203 (CSSS…TSTN).

The protein belongs to the WUS homeobox family.

It localises to the nucleus. Transcription factor which may be involved in developmental processes. The chain is WUSCHEL-related homeobox 3 (WOX3) from Oryza sativa subsp. indica (Rice).